We begin with the raw amino-acid sequence, 385 residues long: S-adenosylmethionine synthase (385 aa).

H16 is a binding site for ATP. Mg(2+) is bound at residue D18. E44 lines the K(+) pocket. Residues E57 and Q100 each coordinate L-methionine. The flexible loop stretch occupies residues 100-110; it reads QSPDINQGVDR. Residues 164–166, 230–231, D239, 245–246, A262, and K266 each bind ATP; these read DGK, KF, and RK. Position 239 (D239) interacts with L-methionine. K270 lines the L-methionine pocket.

The protein belongs to the AdoMet synthase family. In terms of assembly, homotetramer; dimer of dimers. Requires Mg(2+) as cofactor. K(+) is required as a cofactor.

It localises to the cytoplasm. It catalyses the reaction L-methionine + ATP + H2O = S-adenosyl-L-methionine + phosphate + diphosphate. It functions in the pathway amino-acid biosynthesis; S-adenosyl-L-methionine biosynthesis; S-adenosyl-L-methionine from L-methionine: step 1/1. Its function is as follows. Catalyzes the formation of S-adenosylmethionine (AdoMet) from methionine and ATP. The overall synthetic reaction is composed of two sequential steps, AdoMet formation and the subsequent tripolyphosphate hydrolysis which occurs prior to release of AdoMet from the enzyme. The sequence is that of S-adenosylmethionine synthase from Helicobacter pylori (strain HPAG1).